Reading from the N-terminus, the 443-residue chain is Probable D-serine dehydratase (443 aa).

K116 carries the N6-(pyridoxal phosphate)lysine modification.

This sequence belongs to the serine/threonine dehydratase family. DsdA subfamily. Pyridoxal 5'-phosphate serves as cofactor.

It catalyses the reaction D-serine = pyruvate + NH4(+). The chain is Probable D-serine dehydratase from Bacillus cereus (strain B4264).